The sequence spans 59 residues: Phycobilisome degradation protein NblA (59 aa).

To chloroplast ycf18.

In terms of biological role, involved in phycobilisome (PBS) degradation during nutrient deprivation. May mark the PBS for degradation by covalent association with PBS components or may disrupt the PBS via ionic interactions. This Synechococcus elongatus (strain ATCC 33912 / PCC 7942 / FACHB-805) (Anacystis nidulans R2) protein is Phycobilisome degradation protein NblA.